The primary structure comprises 771 residues: Post-GPI attachment to proteins factor 6 (771 aa).

Positions 1–34 are cleaved as a signal peptide; sequence MGRAGTGTGGEAVAAVVAGPLLLLLLARPPPASA. Residues 35–545 lie on the Extracellular side of the membrane; it reads GYSGKSEVGL…STAQTVAQQR (511 aa). An N-linked (GlcNAc...) asparagine glycan is attached at Asn-144. Positions 322-343 are disordered; the sequence is FNASSGLLSPSPDHQDLGRSGR. The span at 334 to 343 shows a compositional bias: basic and acidic residues; that stretch reads DHQDLGRSGR. Residues Asn-407 and Asn-431 are each glycosylated (N-linked (GlcNAc...) asparagine). The 37-residue stretch at 497–533 folds into the EGF-like domain; sequence PCLNDCGPYGQCLLLRRHSYLYASCSCKAGWRGWSCT. Disulfide bonds link Cys-498/Cys-508, Cys-502/Cys-521, and Cys-523/Cys-532. Residues 546-566 traverse the membrane as a helical segment; it reads AATLLLTLSNLMFLAPIAVSV. Residues 567–568 lie on the Cytoplasmic side of the membrane; the sequence is RR. Residues 569-589 traverse the membrane as a helical segment; sequence FFLVEASVYAYTMFFSTFYHA. At 590–605 the chain is on the extracellular side; it reads CDQPGEAVLCILSYDT. A helical membrane pass occupies residues 606-626; it reads LQYCDFLGSGAAIWVTILCMA. The Cytoplasmic segment spans residues 627 to 629; the sequence is RLK. A helical transmembrane segment spans residues 630 to 650; sequence TVLKYVLFLLGTLVIAMSLQL. The Extracellular portion of the chain corresponds to 651–653; it reads DRR. Residues 654 to 674 form a helical membrane-spanning segment; the sequence is GMWNMLGPCLFAFVIMASMWA. Over 675-690 the chain is Cytoplasmic; it reads YRCGHRRQCYPTSWQR. Residues 691–711 traverse the membrane as a helical segment; sequence WAFYLLPGVSMASVGIAIYTS. Residues 712–717 lie on the Extracellular side of the membrane; that stretch reads MMTSDN. A helical transmembrane segment spans residues 718 to 738; it reads YYYTHSIWHILLAGSAALLLP. At 739–771 the chain is on the cytoplasmic side; it reads PPDQPAEPWACSQKFPCHYQICKNDREELYAVT.

It belongs to the TMEM8 family. In terms of processing, glycosylated. As to expression, expressed in pancreas, placenta, spleen, liver, kidney, bone marrow, peripheral blood leukocytes and tonsil.

Its subcellular location is the cell membrane. The protein resides in the lysosome membrane. The catalysed reaction is a 1,2-diacyl-sn-glycero-3-phosphocholine + H2O = a 1-acyl-sn-glycero-3-phosphocholine + a fatty acid + H(+). Functionally, involved in the lipid remodeling steps of GPI-anchor maturation. Lipid remodeling steps consist in the generation of 2 saturated fatty chains at the sn-2 position of GPI-anchor proteins (GPI-AP). Has phospholipase A2 activity that removes an acyl-chain at the sn-2 position of GPI-anchors during the remodeling of GPI. Required for the shedding of the GPI-AP CRIPTO, but not CFC1, at the cell surface. Shedding of CRIPTO modulates Nodal signaling by allowing soluble CRIPTO to act as a Nodal coreceptor on other cells. Also indirectly involved in the translocation of RAC1 from the cytosol to the plasma membrane by maintaining the steady state amount of CAV1-enriched plasma membrane subdomains, stabilizing RAC1 at the plasma membrane. In contrast to myomaker (TMEM8C), has no fusogenic activity. The sequence is that of Post-GPI attachment to proteins factor 6 from Homo sapiens (Human).